The following is a 586-amino-acid chain: Old nuclease (586 aa).

Residues 1–163 (MTVRLASVSI…VEDSTKCKNT (163 aa)) are ATPase domain N-terminus. An ATP-binding site is contributed by 34–38 (NAGKS). Residues 164–270 (TTIGKILSAI…SRFGHGTQRS (107 aa)) are dimerization domain. Positions 271 to 390 (IQMALIQYLA…TLSNSSYLLF (120 aa)) are ATPase domain C-terminus. Residues 393-586 (EVLLVEGKTE…DEMEDFIKWI (194 aa)) are toprim domain. The a divalent metal cation site is built by glutamate 398, glutamate 402, aspartate 453, aspartate 455, aspartate 541, and glutamate 543. The Stabilizes transition state or protonates leaving group role is filled by arginine 570.

It belongs to the class 1 OLD nuclease family. The cofactor is Mg(2+).

The enzyme catalyses Exonucleolytic cleavage in the 5'- to 3'-direction to yield nucleoside 5'-phosphates.. Functionally, an exonuclease that acts preferentially on linear dsDNA, processively degrading it from 5'-3', releasing 5'-phosphomononucleotides. Initiates on 5'-phosphate and 5'-hydroxyl ends. Also acts on linear ssDNA, nicked DNA and RNA. ATP enhances but is not necessary for exonuclease activity; has ATPase activity that is not stimulated by DNA. The old protein kills E.coli recB and recC mutants and interferes with phage lambda growth. Both the exonuclease and ATPase activities are required in vivo. Probably interferes with lambda phage by degrading its linear DNA. Isolated as a mutant able to lysogenize E.coli strain C cells normally not susceptible to lysis by phage P2. The polypeptide is Old nuclease (Enterobacteriaceae (Bacteriophage P2)).